The following is a 204-amino-acid chain: MLTEQQINQLDWEKVDHLMPAIVQHAVSGEVLMMGYMNQEALAVTEKTGKVTFFSRTKQRLWTKGESSGHFLNVVNIYPDCDNDTLLILVKPIGPTCHLGNSSCFAPAASDWSFLYQLEQLLASRKSADPASSYTAKLYASGTKRIAQKVGEEGVETALAATVNDREELTNEASDLMYHLLVLLQDQDLDFSTVIGRLRERHEK.

The phosphoribosyl-AMP cyclohydrolase stretch occupies residues 1–114 (MLTEQQINQL…FAPAASDWSF (114 aa)). The segment at 115-204 (LYQLEQLLAS…IGRLRERHEK (90 aa)) is phosphoribosyl-ATP pyrophosphohydrolase.

This sequence in the N-terminal section; belongs to the PRA-CH family. The protein in the C-terminal section; belongs to the PRA-PH family.

It is found in the cytoplasm. The enzyme catalyses 1-(5-phospho-beta-D-ribosyl)-ATP + H2O = 1-(5-phospho-beta-D-ribosyl)-5'-AMP + diphosphate + H(+). It carries out the reaction 1-(5-phospho-beta-D-ribosyl)-5'-AMP + H2O = 1-(5-phospho-beta-D-ribosyl)-5-[(5-phospho-beta-D-ribosylamino)methylideneamino]imidazole-4-carboxamide. It functions in the pathway amino-acid biosynthesis; L-histidine biosynthesis; L-histidine from 5-phospho-alpha-D-ribose 1-diphosphate: step 2/9. Its pathway is amino-acid biosynthesis; L-histidine biosynthesis; L-histidine from 5-phospho-alpha-D-ribose 1-diphosphate: step 3/9. The protein is Histidine biosynthesis bifunctional protein HisIE (hisI) of Yersinia pestis.